A 1865-amino-acid chain; its full sequence is Transcription initiation factor TFIID subunit 1 (1865 aa).

A disordered region spans residues Met-1–Gly-27. The region spanning Met-1–Ile-409 is the Protein kinase 1 domain. Ser-131 bears the Phosphoserine; by autocatalysis mark. The interval Glu-144 to Asp-199 is disordered. Residues Met-151–Pro-160 are compositionally biased toward pro residues. Over residues Val-161–Asp-176 the composition is skewed to basic and acidic residues. Phosphoserine; by autocatalysis is present on Ser-302. A disordered region spans residues Pro-509 to Leu-530. Positions Lys-512–Lys-971 are histone acetyltransferase (HAT). Lys-539 carries the post-translational modification N6-acetyllysine. Glycyl lysine isopeptide (Lys-Gly) (interchain with G-Cter in SUMO2) cross-links involve residues Lys-544 and Lys-557. 2 disordered regions span residues Pro-964–Val-983 and Arg-1228–Arg-1252. 2 stretches are compositionally biased toward basic and acidic residues: residues Gln-969–Pro-978 and Arg-1228–Lys-1244. Residues Val-1190–Met-1268 constitute a DNA-binding region (HMG box). The segment at Val-1337–Ala-1624 is interaction with ASF1A and ASF1B. The short motif at Pro-1346–Val-1353 is the Nuclear localization signal element. Bromo domains are found at residues Arg-1371–Lys-1479 and Leu-1493–Tyr-1602. Positions Met-1420–Glu-1865 constitute a Protein kinase 2 domain. The segment at Glu-1625 to Glu-1865 is disordered. Residues Thr-1633–Pro-1642 are compositionally biased toward pro residues. Polar residues predominate over residues Asp-1646 to Gln-1682. Phosphoserine is present on residues Ser-1664 and Ser-1667. 2 stretches are compositionally biased toward acidic residues: residues Glu-1683–Gly-1697 and Glu-1715–Asp-1730. A compositionally biased stretch (low complexity) spans Ser-1739–Ser-1751. A phosphoserine mark is found at Ser-1773, Ser-1776, and Ser-1794. Over residues Lys-1804–Ser-1814 the composition is skewed to polar residues. A compositionally biased stretch (acidic residues) spans Val-1820–Glu-1829. Ser-1821 bears the Phosphoserine mark. Residues Ser-1832–His-1841 are compositionally biased toward polar residues.

It belongs to the TAF1 family. Component of the TFIID basal transcription factor complex, composed of TATA-box-binding protein TBP, and a number of TBP-associated factors (TAFs), including TAF1, TAF2, TAF3, TAF4, TAF5, TAF6, TAF7, TAF8, TAF9, TAF10, TAF11, TAF12 and TAF13. Interacts with TAF7; the interaction is direct. TAF1, when part of the TFIID complex, interacts with C-terminus of TP53. Part of a TFIID-containing RNA polymerase II pre-initiation complex that is composed of TBP and at least GTF2A1, GTF2A2, GTF2E1, GTF2E2, GTF2F1, GTF2H2, GTF2H3, GTF2H4, GTF2H5, GTF2B, TCEA1, ERCC2, ERCC3, TAF1, TAF2, TAF3, TAF4, TAF5, TAF6, TAF7, TAF8, TAF9, TAF10, TAF11, TAF12 and TAF13. Component of some MLL1/MLL complex, at least composed of the core components KMT2A/MLL1, ASH2L, HCFC1/HCF1, WDR5 and RBBP5, as well as the facultative components BACC1, CHD8, E2F6, HSP70, INO80C, KANSL1, LAS1L, MAX, MCRS1, MGA, KAT8/MOF, PELP1, PHF20, PRP31, RING2, RUVB1/TIP49A, RUVB2/TIP49B, SENP3, TAF1, TAF4, TAF6, TAF7, TAF9 and TEX10. RB1 interacts with the N-terminal domain of TAF1. Interacts with ASF1A and ASF1B. Interacts (via bromo domains) with acetylated lysine residues on the N-terminus of histone H1.4, H2A, H2B, H3 and H4 (in vitro). Mg(2+) serves as cofactor. Phosphorylated by casein kinase II in vitro.

It localises to the nucleus. It carries out the reaction L-seryl-[protein] + ATP = O-phospho-L-seryl-[protein] + ADP + H(+). The catalysed reaction is L-threonyl-[protein] + ATP = O-phospho-L-threonyl-[protein] + ADP + H(+). It catalyses the reaction L-lysyl-[protein] + acetyl-CoA = N(6)-acetyl-L-lysyl-[protein] + CoA + H(+). Autophosphorylates on Ser residues. Inhibited by retinoblastoma tumor suppressor protein, RB1. Binding to TAF1 or CIITA inhibits the histone acetyltransferase activity. Functionally, the TFIID basal transcription factor complex plays a major role in the initiation of RNA polymerase II (Pol II)-dependent transcription. TFIID recognizes and binds promoters with or without a TATA box via its subunit TBP, a TATA-box-binding protein, and promotes assembly of the pre-initiation complex (PIC). The TFIID complex consists of TBP and TBP-associated factors (TAFs), including TAF1, TAF2, TAF3, TAF4, TAF5, TAF6, TAF7, TAF8, TAF9, TAF10, TAF11, TAF12 and TAF13. TAF1 is the largest component and core scaffold of the TFIID complex, involved in nucleating complex assembly. TAF1 forms a promoter DNA binding subcomplex of TFIID, together with TAF7 and TAF2. Contains novel N- and C-terminal Ser/Thr kinase domains which can autophosphorylate or transphosphorylate other transcription factors. Phosphorylates TP53 on 'Thr-55' which leads to MDM2-mediated degradation of TP53. Phosphorylates GTF2A1 and GTF2F1 on Ser residues. Possesses DNA-binding activity. Essential for progression of the G1 phase of the cell cycle. In Mesocricetus auratus (Golden hamster), this protein is Transcription initiation factor TFIID subunit 1.